Here is a 174-residue protein sequence, read N- to C-terminus: Shikimate kinase (174 aa).

Gly15–Thr20 provides a ligand contact to ATP. Ser19 serves as a coordination point for Mg(2+). 3 residues coordinate substrate: Asp37, Arg61, and Gly82. Residue Arg120 coordinates ATP. Arg138 serves as a coordination point for substrate.

It belongs to the shikimate kinase family. In terms of assembly, monomer. Requires Mg(2+) as cofactor.

The protein resides in the cytoplasm. The catalysed reaction is shikimate + ATP = 3-phosphoshikimate + ADP + H(+). It functions in the pathway metabolic intermediate biosynthesis; chorismate biosynthesis; chorismate from D-erythrose 4-phosphate and phosphoenolpyruvate: step 5/7. Catalyzes the specific phosphorylation of the 3-hydroxyl group of shikimic acid using ATP as a cosubstrate. This is Shikimate kinase from Staphylococcus aureus (strain Mu3 / ATCC 700698).